The chain runs to 20 residues: Thrombin-like enzyme Cdc SII (20 aa).

This sequence belongs to the peptidase S1 family. Snake venom subfamily. Monomer. As to expression, expressed by the venom gland.

The protein localises to the secreted. Strongly inhibited by PMSF and moderately inhibited by leupeptin. Not inhibited by EDTA, aprotinin, pepstatin, and bestatin. In terms of biological role, thrombin-like snake venom serine protease that coagulates human plasma and bovine fibrinogen by hydrolysis of the alpha chains (FGA) (minimum coagulation dose is 60 ug on fibrinogen). Has fibrinogenolytic activities, and degrades preferentially the Aalpha chain (FGA). Shows amidolytic activity toward N-benzoyl-L-Arg-p-nitroanilide, has a higher activity than Cdc SI. In vivo, intravenous injection induces defibrin(ogen)ation and a loss of the righting reflex and opisthotoxins, together with a typical gyroxin-like effect (18-20 minutes). Subcutaneous injection into the footpads induces moderate edema. Potentiates local hemorrhagic activity induced by metalloproteinases (BaP1). This is Thrombin-like enzyme Cdc SII from Crotalus durissus cumanensis (South American rattlesnake).